The following is a 133-amino-acid chain: ATP synthase epsilon chain (133 aa).

Belongs to the ATPase epsilon chain family. F-type ATPases have 2 components, CF(1) - the catalytic core - and CF(0) - the membrane proton channel. CF(1) has five subunits: alpha(3), beta(3), gamma(1), delta(1), epsilon(1). CF(0) has three main subunits: a, b and c.

The protein localises to the cell membrane. In terms of biological role, produces ATP from ADP in the presence of a proton gradient across the membrane. This Clostridium perfringens (strain SM101 / Type A) protein is ATP synthase epsilon chain.